The following is a 446-amino-acid chain: Glycogen synthase (446 aa).

R15 lines the ADP-alpha-D-glucose pocket.

This sequence belongs to the glycosyltransferase 1 family. Bacterial/plant glycogen synthase subfamily.

It carries out the reaction [(1-&gt;4)-alpha-D-glucosyl](n) + ADP-alpha-D-glucose = [(1-&gt;4)-alpha-D-glucosyl](n+1) + ADP + H(+). It functions in the pathway glycan biosynthesis; glycogen biosynthesis. Synthesizes alpha-1,4-glucan chains using ADP-glucose. The polypeptide is Glycogen synthase (Deinococcus deserti (strain DSM 17065 / CIP 109153 / LMG 22923 / VCD115)).